The primary structure comprises 499 residues: Protein phosphatase PP2A 55 kDa regulatory subunit (499 aa).

The disordered stretch occupies residues 1 to 30; sequence MGRWGRQSPVLEPPDPQMQTTPPPPTLPPR. Positions 11-28 are enriched in pro residues; that stretch reads LEPPDPQMQTTPPPPTLP. WD repeat units lie at residues 79 to 118, 144 to 185, 228 to 266, 277 to 317, 336 to 374, 391 to 432, and 467 to 498; these read TDAD…KAAN, EIEE…KSFG, AHTY…QSYN, ELTE…LCDR, EIIS…KPIE, ENDC…DVTL, and DFNK…FQDK.

The protein belongs to the phosphatase 2A regulatory subunit B family. PP2A exists in several trimeric forms, all of which consist of a core composed of a catalytic subunit associated with a 65 kDa regulatory subunit (PR65) (subunit A). The core complex associates with a third, variable subunit (subunit B), which confers distinct properties to the holoenzyme.

Functionally, could perform a substrate recognition function or could be responsible for targeting the enzyme complex to the appropriate subcellular compartment. In Drosophila melanogaster (Fruit fly), this protein is Protein phosphatase PP2A 55 kDa regulatory subunit (tws).